The primary structure comprises 384 residues: Glucans biosynthesis protein C (384 aa).

The next 10 membrane-spanning stretches (helical) occupy residues 17–37 (AWLMLLGIPFHISLIYSTHSW), 54–74 (FIHAFRMQVFFVISGYFSYML), 91–111 (VGIPMLTAIPLLTLPQFILLQ), 140–160 (LWFLLVLVILTTVSIGIFTWF), 173–193 (AISLAKLSLIFFLLGVAYAAI), 212–232 (FIVMQTLFYVPFFILGALAFI), 240–260 (FTTPSRGCTLGAAVAFIAYLL), 274–294 (TESVITMVMGLWMVNVVFSLG), 311–331 (ASLFIYLVHHPLTLFFGAYIT), and 338–358 (LIGFLCGLIFVMGIALILYEI).

This sequence belongs to the acyltransferase 3 family. OpgC subfamily.

It localises to the cell membrane. It functions in the pathway glycan metabolism; osmoregulated periplasmic glucan (OPG) biosynthesis. Its function is as follows. Necessary for the succinyl substitution of periplasmic glucans. Could catalyze the transfer of succinyl residues from the cytoplasmic side of the membrane to the nascent glucan backbones on the periplasmic side of the membrane. This Salmonella heidelberg (strain SL476) protein is Glucans biosynthesis protein C.